Here is an 887-residue protein sequence, read N- to C-terminus: MSGVNEIRSMFLDYFRKNGHEIVSSSPLVPRNDPTLMFTNAGMVQFKNVFTGLEQRPYSTAATAQKCVRAGGKHNDLDNVGYTARHHTFFEMLGNFSFGDYFKERAIELAWNLITKEYGLDAKRLLVTVYHTDDEAFGLWKKIAGLSDDRIIRIATSDNFWAMGDTGPCGPCSEIFYDHGDHIWGGPPGSAEEDGDRFIEIWNLVFMQYEQITKEERVDLPRPSIDTGMGLERVAAVLQGQHDNYDIDLFRALIAASEEATGVKAEGDRRASHRVIADHLRSSAFLIADGVLPSNEGRGYVLRRIMRRAMRHAQLLGARDPLMWKLLPALVGQMGRAYPELVRAEALISETLKLEETRFRKTLERGLNLLAEASADLSEGDQFNGETAFKLYDTYGFPLDLTQDALRAKGIGVDTDAFTAAMQRQKAEARANWAGSGEAATETIWFELRDKHGATDFLGYDTESAEGVILAIVKDGAVVESAAKGENVQLVLNQTPFYGESGGQVGDTGVITTETGKLTVTDTQKRGEGLFVHYCTVEEGSVKTGEAAALTVDHARRARLRANHSATHLLHEALREVLGTHVAQKGSLVAPERLRFDVSHPKPMTAEELKIVEEMANEIIVQNTPVVTRLMSVDDAIAEGAMALFGEKYGDEVRVVSMGQGLRGSKAGKPYSVELCGGTHVSATGDIGLVRVVSESAVGAGVRRVEALTGEAARAYLGEQDERVKTLAAALKVQPADVLGRVEALLDERRKLERELTEAKKKLALAGDGQNGSGDAARDIGGVRFLGRVVSGVEPKDLKSLADDGKKSLGSGVVAFVGVSGDGKASAVVAVTDDLTSKVSAVDLVRVASAALGGKGGGGRPDMAQAGGPDGGRAAEAIEAVAGALAG.

Zn(2+)-binding residues include His564, His568, Cys676, and His680.

This sequence belongs to the class-II aminoacyl-tRNA synthetase family. Zn(2+) serves as cofactor.

It is found in the cytoplasm. The enzyme catalyses tRNA(Ala) + L-alanine + ATP = L-alanyl-tRNA(Ala) + AMP + diphosphate. Catalyzes the attachment of alanine to tRNA(Ala) in a two-step reaction: alanine is first activated by ATP to form Ala-AMP and then transferred to the acceptor end of tRNA(Ala). Also edits incorrectly charged Ser-tRNA(Ala) and Gly-tRNA(Ala) via its editing domain. The polypeptide is Alanine--tRNA ligase (Rhizobium meliloti (strain 1021) (Ensifer meliloti)).